Consider the following 311-residue polypeptide: MTAEVFDPRALRDAFGAFATGVTVVTASDAAGKPIGFTANSFTSVSLDPPLLLVCLAKSSRNYESMTSAGRFAINVLSETQKDVSNTFARPVEDRFAAVDWRLGRDGCPIFSDVAAWFECSMQDIIEAGDHVIIIGRVTAFENSGLNGLGYARGGYFTPRLAGKAVSAAVEGEIRLGAVLEQQGAVFLAGNETLSLPNCTVEGGDPARTLAAYLEQLTGLNVTIGFLYSVYEDKSDGRQNIVYHALASDGAPRQGRFLRPAELAAAKFSSSATADIINRFVLESSIGNFGIYFGDETGGTVHPIANKDAHS.

Residues 38 to 41, 55 to 61, 88 to 89, and R95 contribute to the FMN site; these read TANS, CLAKSSR, and FA.

The protein belongs to the non-flavoprotein flavin reductase family.

The sequence is that of Probable flavin reductase from Rhizobium meliloti (strain 1021) (Ensifer meliloti).